We begin with the raw amino-acid sequence, 419 residues long: Caspase-12 (419 aa).

A CARD domain is found at 1-92; sequence MAARRTHERD…QLSLQFSNDE (92 aa). A Phosphoserine modification is found at Ser85. A disordered region spans residues 88–113; the sequence is FSNDEDDGPQKICTPSSPSESKRKVE. Residues His250 and Cys298 contribute to the active site.

This sequence belongs to the peptidase C14A family. In terms of assembly, heterotetramer that consists of two anti-parallel arranged heterodimers, each one formed by two subunits (Potential). Interacts with TRAF2 under resting conditions; this interaction is reduced in ER stress conditions. In terms of tissue distribution, mainly expressed in skeletal muscle and lung.

Involved in the activation cascade of caspases responsible for apoptosis execution. This Mus musculus (Mouse) protein is Caspase-12 (Casp12).